A 182-amino-acid chain; its full sequence is UPF0397 protein VS_II0189 (182 aa).

5 helical membrane passes run Val8 to Val28, Ala41 to Ile61, Trp72 to Phe92, Phe110 to Phe130, and Gln146 to Leu166.

It belongs to the UPF0397 family.

The protein resides in the cell membrane. The chain is UPF0397 protein VS_II0189 from Vibrio atlanticus (strain LGP32) (Vibrio splendidus (strain Mel32)).